A 319-amino-acid polypeptide reads, in one-letter code: Acetyl esterase (319 aa).

An Involved in the stabilization of the negatively charged intermediate by the formation of the oxyanion hole motif is present at residues H91–G93. Active-site residues include S165, D262, and H292.

It belongs to the 'GDXG' lipolytic enzyme family. As to quaternary structure, homodimer. Interacts with MalT and MelA.

The protein resides in the cytoplasm. Functionally, displays esterase activity towards short chain fatty esters (acyl chain length of up to 8 carbons). Able to hydrolyze triacetylglycerol (triacetin) and tributyrylglycerol (tributyrin), but not trioleylglycerol (triolein) or cholesterol oleate. Negatively regulates MalT activity by antagonizing maltotriose binding. Inhibits MelA galactosidase activity. This chain is Acetyl esterase, found in Escherichia coli O157:H7.